A 324-amino-acid polypeptide reads, in one-letter code: D-alanine--D-alanine ligase (324 aa).

The region spanning 121–321 (NQYLKAFGVR…IKDVMTDIIE (201 aa)) is the ATP-grasp domain. 149–204 (VEKIGLPCFIKPNLGGSSFGVTKVKTREQIQPAIAKAFSEAEEVMIEAFMGGTELT) provides a ligand contact to ATP. Positions 275, 288, and 290 each coordinate Mg(2+).

Belongs to the D-alanine--D-alanine ligase family. The cofactor is Mg(2+). Mn(2+) is required as a cofactor.

It localises to the cytoplasm. The catalysed reaction is 2 D-alanine + ATP = D-alanyl-D-alanine + ADP + phosphate + H(+). The protein operates within cell wall biogenesis; peptidoglycan biosynthesis. Its function is as follows. Cell wall formation. In Bacteroides fragilis (strain ATCC 25285 / DSM 2151 / CCUG 4856 / JCM 11019 / LMG 10263 / NCTC 9343 / Onslow / VPI 2553 / EN-2), this protein is D-alanine--D-alanine ligase.